The chain runs to 374 residues: MWKSLVFFVSALIWSFGSSQDCTTPTGSRSNCVSLYQCQPLYNAFEQRPLPTHVVSYLGRSQCGFEGYVPRVCCGPLPEEQEATSARPTQAPTQGSSDVFPEDSSPAPRNQCGIDTTGDRVYGGTITDLDEFPWMALLGYRTKKGTTSYQCGGVLVNHRYILTAAHCITGAIEQAVGTLITVRLGEYDTQQDVDCIDSVCADRPQEIRVASAYPHPGYSDKNKNRQDDIGIVRLATRAAYTYYVQPICLIDNRARLDTGSDVYVAGWGKTLNGRNSPIKLKLNLPIFNKQECDDKHRGEVLSSVQICAGGVFAEDACRGDSGGPLMKKTPNGIWEVVGVVSFGYGCGRDGWPGVYTSVARYIDWIQNTIASSNV.

The signal sequence occupies residues 1–19 (MWKSLVFFVSALIWSFGSS). Positions 20-120 (QDCTTPTGSR…QCGIDTTGDR (101 aa)) are cleaved as a propeptide — activation peptide. In terms of domain architecture, Clip spans 21–74 (DCTTPTGSRSNCVSLYQCQPLYNAFEQRPLPTHVVSYLGRSQCGFEGYVPRVCC). 3 disulfide bridges follow: Cys22–Cys73, Cys32–Cys63, and Cys38–Cys74. The span at 83–97 (ATSARPTQAPTQGSS) shows a compositional bias: polar residues. The disordered stretch occupies residues 83–114 (ATSARPTQAPTQGSSDVFPEDSSPAPRNQCGI). The Peptidase S1 domain occupies 121–370 (VYGGTITDLD…YIDWIQNTIA (250 aa)). Cysteines 151 and 167 form a disulfide. His166 (charge relay system) is an active-site residue. Glu186 and Asp194 together coordinate Ca(2+). Asp228 serves as the catalytic Charge relay system. Disulfide bonds link Cys292-Cys307 and Cys317-Cys346. Ser321 functions as the Charge relay system in the catalytic mechanism.

This sequence belongs to the peptidase S1 family. CLIP subfamily. Activated by the removal of the N-terminal inhibitory propeptide. As to expression, expressed in hemocytes.

The protein localises to the secreted. Its activity is regulated as follows. Inhibited by aprotenin. Not inhibited by EDTA, PMSF or leupeptin. Serine protease which, by cleaving and activating prophenoloxidase (PPO1) after immune challenge, plays an essential role in the melanization immune response to wounding. This chain is Phenoloxidase-activating enzyme 1, found in Spodoptera litura (Asian cotton leafworm).